The sequence spans 224 residues: ATP-dependent dethiobiotin synthetase BioD (224 aa).

Position 14–19 (14–19 (GIGKTV)) interacts with ATP. Thr-18 serves as a coordination point for Mg(2+). The active site involves Lys-39. Ser-43 lines the substrate pocket. ATP-binding positions include Asp-56, 117–120 (EGVG), and 177–178 (NE). Positions 56 and 117 each coordinate Mg(2+).

It belongs to the dethiobiotin synthetase family. As to quaternary structure, homodimer. Mg(2+) serves as cofactor.

The protein localises to the cytoplasm. The catalysed reaction is (7R,8S)-7,8-diammoniononanoate + CO2 + ATP = (4R,5S)-dethiobiotin + ADP + phosphate + 3 H(+). It functions in the pathway cofactor biosynthesis; biotin biosynthesis; biotin from 7,8-diaminononanoate: step 1/2. Its function is as follows. Catalyzes a mechanistically unusual reaction, the ATP-dependent insertion of CO2 between the N7 and N8 nitrogen atoms of 7,8-diaminopelargonic acid (DAPA, also called 7,8-diammoniononanoate) to form a ureido ring. In Xanthomonas campestris pv. campestris (strain B100), this protein is ATP-dependent dethiobiotin synthetase BioD.